A 163-amino-acid polypeptide reads, in one-letter code: Nucleotide-binding protein Cla_1551 (163 aa).

Belongs to the YajQ family.

Its function is as follows. Nucleotide-binding protein. The chain is Nucleotide-binding protein Cla_1551 from Campylobacter lari (strain RM2100 / D67 / ATCC BAA-1060).